We begin with the raw amino-acid sequence, 552 residues long: Pyrophosphate--fructose 6-phosphate 1-phosphotransferase subunit beta (552 aa).

Gly-90 lines the diphosphate pocket. Asp-184 lines the Mg(2+) pocket. Residues 212 to 214 (TID), 251 to 252 (KY), 259 to 261 (MGR), Glu-320, and 425 to 428 (YEGR) each bind substrate. Asp-214 serves as the catalytic Proton acceptor.

The protein belongs to the phosphofructokinase type A (PFKA) family. PPi-dependent PFK group II subfamily. Clade 'Long' sub-subfamily. Tetramer of two alpha (regulatory) and two beta (catalytic) chains. Requires Mg(2+) as cofactor.

The protein resides in the cytoplasm. It catalyses the reaction beta-D-fructose 6-phosphate + diphosphate = beta-D-fructose 1,6-bisphosphate + phosphate + H(+). Its pathway is carbohydrate degradation; glycolysis; D-glyceraldehyde 3-phosphate and glycerone phosphate from D-glucose: step 3/4. With respect to regulation, allosterically activated by fructose 2,6-bisphosphate. Functionally, catalytic subunit of pyrophosphate--fructose 6-phosphate 1-phosphotransferase. Catalyzes the phosphorylation of D-fructose 6-phosphate, the first committing step of glycolysis. Uses inorganic phosphate (PPi) as phosphoryl donor instead of ATP like common ATP-dependent phosphofructokinases (ATP-PFKs), which renders the reaction reversible, and can thus function both in glycolysis and gluconeogenesis. In Ricinus communis (Castor bean), this protein is Pyrophosphate--fructose 6-phosphate 1-phosphotransferase subunit beta.